Consider the following 523-residue polypeptide: Bifunctional purine biosynthesis protein PurH (523 aa).

The region spanning 1–152 is the MGS-like domain; the sequence is MSTDDGRRPI…KNHPSAAVVT (152 aa).

The protein belongs to the PurH family.

The catalysed reaction is (6R)-10-formyltetrahydrofolate + 5-amino-1-(5-phospho-beta-D-ribosyl)imidazole-4-carboxamide = 5-formamido-1-(5-phospho-D-ribosyl)imidazole-4-carboxamide + (6S)-5,6,7,8-tetrahydrofolate. The enzyme catalyses IMP + H2O = 5-formamido-1-(5-phospho-D-ribosyl)imidazole-4-carboxamide. It functions in the pathway purine metabolism; IMP biosynthesis via de novo pathway; 5-formamido-1-(5-phospho-D-ribosyl)imidazole-4-carboxamide from 5-amino-1-(5-phospho-D-ribosyl)imidazole-4-carboxamide (10-formyl THF route): step 1/1. The protein operates within purine metabolism; IMP biosynthesis via de novo pathway; IMP from 5-formamido-1-(5-phospho-D-ribosyl)imidazole-4-carboxamide: step 1/1. This Mycobacterium bovis (strain BCG / Pasteur 1173P2) protein is Bifunctional purine biosynthesis protein PurH.